A 52-amino-acid polypeptide reads, in one-letter code: ATP synthase protein 8 (52 aa).

A helical membrane pass occupies residues 7–27; it reads MKWFLIYFIYLLIFYLFIMLI.

The protein belongs to the ATPase protein 8 family. In terms of assembly, F-type ATPases have 2 components, CF(1) - the catalytic core - and CF(0) - the membrane proton channel.

Its subcellular location is the mitochondrion membrane. Functionally, mitochondrial membrane ATP synthase (F(1)F(0) ATP synthase or Complex V) produces ATP from ADP in the presence of a proton gradient across the membrane which is generated by electron transport complexes of the respiratory chain. F-type ATPases consist of two structural domains, F(1) - containing the extramembraneous catalytic core and F(0) - containing the membrane proton channel, linked together by a central stalk and a peripheral stalk. During catalysis, ATP synthesis in the catalytic domain of F(1) is coupled via a rotary mechanism of the central stalk subunits to proton translocation. Part of the complex F(0) domain. Minor subunit located with subunit a in the membrane. This Apis mellifera ligustica (Common honeybee) protein is ATP synthase protein 8 (mt:ATPase8).